Consider the following 249-residue polypeptide: DNA polymerase sliding clamp 1 (249 aa).

Belongs to the PCNA family. In terms of assembly, homotrimer. The subunits circularize to form a toroid; DNA passes through its center. Replication factor C (RFC) is required to load the toroid on the DNA.

Functionally, sliding clamp subunit that acts as a moving platform for DNA processing. Responsible for tethering the catalytic subunit of DNA polymerase and other proteins to DNA during high-speed replication. This Pyrobaculum aerophilum (strain ATCC 51768 / DSM 7523 / JCM 9630 / CIP 104966 / NBRC 100827 / IM2) protein is DNA polymerase sliding clamp 1.